The chain runs to 418 residues: Probable mitochondrial adenine nucleotide transporter BTL2 (418 aa).

Solcar repeat units follow at residues 122-205, 215-300, and 329-414; these read MNTR…YRKQ, ATNF…LKSS, and LGPI…MKIV. A run of 6 helical transmembrane segments spans residues 127–147, 180–200, 221–241, 276–296, 335–355, and 383–403; these read HLWAGAVAAMVSKTFLAPLER, GNLLNVLRTAPFKAVNFCAYD, FVAGAAAGITATVLCLPLDTI, LVPSIASMALSGAVFYGVYDI, LMYGAIAGACTEVATYPFEVV, and IPALYAGLLPSLLQVLPSASI.

This sequence belongs to the mitochondrial carrier (TC 2.A.29) family.

It is found in the mitochondrion inner membrane. Probable mitochondrial adenylate carrier that catalyzes the transport of ATP, ADP and AMP. This Arabidopsis thaliana (Mouse-ear cress) protein is Probable mitochondrial adenine nucleotide transporter BTL2.